A 307-amino-acid chain; its full sequence is Cytochrome c1 1, heme protein, mitochondrial (307 aa).

Residues 1-64 (MVGGGVIQQI…LLSFSTVASA (64 aa)) constitute a mitochondrion transit peptide. The Mitochondrial intermembrane segment spans residues 65–270 (DEAEHGLESP…EPEMEERKLM (206 aa)). Positions 90 to 246 (ASIRRGHQVY…YEDGVPATEA (157 aa)) constitute a Cytochrome c domain. The heme c site is built by Cys103, Cys106, His107, and Met226. A helical transmembrane segment spans residues 271-288 (GFKWIFLLSLALLQAAYY). Over 289–307 (RRLKWSVLKSRKLVLDVVN) the chain is Mitochondrial matrix.

The protein belongs to the cytochrome c family. Component of the ubiquinol-cytochrome c oxidoreductase (cytochrome b-c1 complex, complex III, CIII), a multisubunit enzyme composed of 10 subunits. The complex is composed of 3 respiratory subunits cytochrome b (MT-CYB), cytochrome c1 (CYC1-1 or CYC1-2) and Rieske protein (UCR1-1 or UCR1-2), 2 core protein subunits MPPalpha1 (or MPPalpha2) and MPPB, and 5 low-molecular weight protein subunits QCR7-1 (or QCR7-2), UCRQ-1 (or UCRQ-2), QCR9, UCRY and probably QCR6-1 (or QCR6-2). The complex exists as an obligatory dimer and forms supercomplexes (SCs) in the inner mitochondrial membrane with NADH-ubiquinone oxidoreductase (complex I, CI), resulting in different assemblies (supercomplexes SCI(1)III(2) and SCI(2)III(4)). In terms of processing, binds 1 heme c group covalently per subunit.

The protein localises to the mitochondrion inner membrane. Its function is as follows. Component of the ubiquinol-cytochrome c oxidoreductase, a multisubunit transmembrane complex that is part of the mitochondrial electron transport chain which drives oxidative phosphorylation. The respiratory chain contains 3 multisubunit complexes succinate dehydrogenase (complex II, CII), ubiquinol-cytochrome c oxidoreductase (cytochrome b-c1 complex, complex III, CIII) and cytochrome c oxidase (complex IV, CIV), that cooperate to transfer electrons derived from NADH and succinate to molecular oxygen, creating an electrochemical gradient over the inner membrane that drives transmembrane transport and the ATP synthase. The cytochrome b-c1 complex catalyzes electron transfer from ubiquinol to cytochrome c, linking this redox reaction to translocation of protons across the mitochondrial inner membrane, with protons being carried across the membrane as hydrogens on the quinol. In the process called Q cycle, 2 protons are consumed from the matrix, 4 protons are released into the intermembrane space and 2 electrons are passed to cytochrome c. Cytochrome c1 is a catalytic core subunit containing a c-type heme. It transfers electrons from the [2Fe-2S] iron-sulfur cluster of the Rieske protein to cytochrome c. This is Cytochrome c1 1, heme protein, mitochondrial (CYC1-1) from Arabidopsis thaliana (Mouse-ear cress).